Here is a 549-residue protein sequence, read N- to C-terminus: Polymorphic pseudokinase ROP5 (549 aa).

The signal sequence occupies residues 1 to 24; sequence MATKLARLATWLVLVGCLLWRAGA. The Protein kinase domain maps to 234 to 527; sequence LKLVEPLRVG…LEAMETPEFL (294 aa). 10 residues coordinate ATP: arginine 241, aspartate 244, arginine 245, serine 246, lysine 263, methionine 337, proline 338, alanine 340, aspartate 343, and aspartate 393. Aspartate 244 contributes to the ADP binding site. Positions 246, 263, 337, 338, and 340 each coordinate ADP. Aspartate 393 contributes to the ADP binding site. Positions 393 and 407 each coordinate Mg(2+). N-linked (GlcNAc...) asparagine glycosylation is present at asparagine 434. Cysteines 458 and 492 form a disulfide.

Belongs to the protein kinase superfamily. Ser/Thr protein kinase family. In terms of assembly, component of a complex at least composed of ROP18 and ROP5. Interacts with GRA7. Interacts with ROP17. Interacts with mouse IRGA6/IIGP1; the interaction results in inhibition of IRGA6/IIGP1 GTPase activity and/or oligomerization.

The protein localises to the secreted. Its subcellular location is the parasitophorous vacuole. It localises to the cytoplasmic vesicle. The protein resides in the secretory vesicle. It is found in the rhoptry. In terms of biological role, pseudokinase. Essential for virulence in the type I lineage. Mediates parasite survival in mouse monocytes. Required for the parasite ability to resist mouse innate immune effectors triggered by the IFN-gamma (IFNG). Reduces the accumulation of mouse IRGA6 (IIGP1) and IRGB6 (TGTP1/TGTP2), immunity-related GTPases (IRGs) that protect mice from infection by certain intracellular pathogens, on the parasitophorous vacuole and IRG-mediated killing of parasites by mouse cells. Regulates the activity of ROP18, an active kinase that targets IRGs to prevent IRG-mediated parasite killing by mouse cells. Acts as an allosteric inhibitor of mouse IRGA6 (IIGP1). Does not affect IFN-gamma (IFNG)-mediated parasite killing in human cells that do not possess the large variety of IRGs. The sequence is that of Polymorphic pseudokinase ROP5 from Toxoplasma gondii.